The following is a 297-amino-acid chain: Nuclear transcription factor Y subunit B-11 (297 aa).

Residues 1 to 25 are disordered; the sequence is MKSRKSYGHLLSPVGSPPLDNESGE. Residues 63–69 mediate DNA binding; the sequence is LPIANVS. A subunit association domain (SAD) region spans residues 90-101; sequence VQECVSEFISFV.

This sequence belongs to the NFYB/HAP3 subunit family. As to quaternary structure, heterotrimeric transcription factor composed of three components, NF-YA, NF-YB and NF-YC. NF-YB and NF-YC must interact and dimerize for NF-YA association and DNA binding. Interacts with NFYC2, NFYC4 and NFYC6. In terms of tissue distribution, expressed in roots, culms, nodes, leaf blades, leaf sheaths and young panicles.

The protein localises to the nucleus. Its subcellular location is the cytoplasm. Probable transcription factor involved in the regulation of flowering time under long day (LD) conditions. Functions as a repressor of flowering, independently of HD1 and GHD7. Controls flowering time by negatively regulating the expression of EHD1 and HD3A. Regulates plant height by promoting cell elongation in the internodes. Component of the NF-Y/HAP transcription factor complex. The sequence is that of Nuclear transcription factor Y subunit B-11 (HD5) from Oryza sativa subsp. japonica (Rice).